Consider the following 620-residue polypeptide: Glutathione-regulated potassium-efflux system protein KefC (620 aa).

Topologically, residues 1 to 3 are periplasmic; that stretch reads MDS. The helical transmembrane segment at 4 to 24 threads the bilayer; that stretch reads HTLIQALIYLGSAALIVPIAV. Position 25 (Arg-25) is a topological domain, cytoplasmic. A helical membrane pass occupies residues 26 to 46; that stretch reads LGLGSVLGYLIAGCIIGPWGL. At 47-53 the chain is on the periplasmic side; that stretch reads RLVTDAE. Residues 54–74 traverse the membrane as a helical segment; sequence SILHFAEIGVVLMLFIIGLEL. Topologically, residues 75–89 are cytoplasmic; the sequence is DPQRLWKLRAAVFGG. The chain crosses the membrane as a helical span at residues 90–110; the sequence is GALQMVICGGLLGLFCMLLGL. The Periplasmic segment spans residues 111–113; the sequence is RWQ. A helical transmembrane segment spans residues 114–134; sequence VAELIGMTLALSSTAIAMQAM. Over 135–148 the chain is Cytoplasmic; sequence NERNLMVTQMGRSA. The helical transmembrane segment at 149–169 threads the bilayer; it reads FAVLLFQDIAAIPLVAMIPLL. Residues 170–177 lie on the Periplasmic side of the membrane; the sequence is AASSASTT. A helical transmembrane segment spans residues 178-198; that stretch reads MGAFVLSALKVAGALALVVLL. Residues 199 to 213 are Cytoplasmic-facing; sequence GRYVTRPALRFVARS. Residues 214-233 traverse the membrane as a helical segment; sequence GLREVFSAVALFLVFGFGLL. At 234–236 the chain is on the periplasmic side; the sequence is LEE. Residues 237 to 254 traverse the membrane as a helical segment; that stretch reads VGLSMAMGAFLAGVLLAS. At 255 to 269 the chain is on the cytoplasmic side; sequence SEYRHALESDIEPFK. Residues 270–290 traverse the membrane as a helical segment; it reads GLLLGLFFIGVGMSIDFGTLL. Topologically, residues 291-293 are periplasmic; the sequence is ENP. The helical transmembrane segment at 294–314 threads the bilayer; the sequence is LRIVILLLGFLIIKIAMLWLI. The Cytoplasmic segment spans residues 315 to 326; sequence ARPLQVPNKQRR. Residues 327 to 347 form a helical membrane-spanning segment; it reads WFAVLLGQGSEFAFVVFGAAQ. Residues 348 to 358 lie on the Periplasmic side of the membrane; that stretch reads MANVLEPEWAK. A helical transmembrane segment spans residues 359–379; the sequence is SLTLAVALSMAATPILLVILN. The Cytoplasmic portion of the chain corresponds to 380–620; the sequence is RLEQSSTEEA…ADEPETKPSS (241 aa). An RCK N-terminal domain is found at 399-518; that stretch reads QPRVIIAGFG…AGVEKPERET (120 aa). The disordered stretch occupies residues 597-620; sequence GWQGTEEGKHTGNMADEPETKPSS.

Belongs to the monovalent cation:proton antiporter 2 (CPA2) transporter (TC 2.A.37) family. KefC subfamily. In terms of assembly, homodimer. Interacts with the regulatory subunit KefF.

It localises to the cell inner membrane. Pore-forming subunit of a potassium efflux system that confers protection against electrophiles. Catalyzes K(+)/H(+) antiport. This is Glutathione-regulated potassium-efflux system protein KefC from Escherichia coli O6:H1 (strain CFT073 / ATCC 700928 / UPEC).